Consider the following 70-residue polypeptide: Small ribosomal subunit protein bS21A (70 aa).

The protein belongs to the bacterial ribosomal protein bS21 family.

In Burkholderia mallei (strain ATCC 23344), this protein is Small ribosomal subunit protein bS21A (rpsU1).